We begin with the raw amino-acid sequence, 382 residues long: Dual-specificity RNA methyltransferase RlmN (382 aa).

Glu96 acts as the Proton acceptor in catalysis. Residues 102–342 (QGGRGTLCVS…VRTTRGEDID (241 aa)) form the Radical SAM core domain. Cys109 and Cys345 form a disulfide bridge. [4Fe-4S] cluster-binding residues include Cys116, Cys120, and Cys123. Residues 170–171 (GE), Ser202, 224–226 (SLH), and Asn302 each bind S-adenosyl-L-methionine. Residue Cys345 is the S-methylcysteine intermediate of the active site.

Belongs to the radical SAM superfamily. RlmN family. [4Fe-4S] cluster is required as a cofactor.

It is found in the cytoplasm. It carries out the reaction adenosine(2503) in 23S rRNA + 2 reduced [2Fe-2S]-[ferredoxin] + 2 S-adenosyl-L-methionine = 2-methyladenosine(2503) in 23S rRNA + 5'-deoxyadenosine + L-methionine + 2 oxidized [2Fe-2S]-[ferredoxin] + S-adenosyl-L-homocysteine. The catalysed reaction is adenosine(37) in tRNA + 2 reduced [2Fe-2S]-[ferredoxin] + 2 S-adenosyl-L-methionine = 2-methyladenosine(37) in tRNA + 5'-deoxyadenosine + L-methionine + 2 oxidized [2Fe-2S]-[ferredoxin] + S-adenosyl-L-homocysteine. In terms of biological role, specifically methylates position 2 of adenine 2503 in 23S rRNA and position 2 of adenine 37 in tRNAs. m2A2503 modification seems to play a crucial role in the proofreading step occurring at the peptidyl transferase center and thus would serve to optimize ribosomal fidelity. This chain is Dual-specificity RNA methyltransferase RlmN, found in Stutzerimonas stutzeri (strain A1501) (Pseudomonas stutzeri).